The following is a 302-amino-acid chain: Protease HtpX homolog (302 aa).

Residues L27–I47 traverse the membrane as a helical segment. Position 141 (H141) interacts with Zn(2+). The active site involves E142. H145 serves as a coordination point for Zn(2+). 2 helical membrane-spanning segments follow: residues V151–A171 and I195–I215. E220 is a binding site for Zn(2+).

The protein belongs to the peptidase M48B family. Requires Zn(2+) as cofactor.

It localises to the cell inner membrane. The sequence is that of Protease HtpX homolog from Aquifex aeolicus (strain VF5).